The primary structure comprises 296 residues: tRNA dimethylallyltransferase (296 aa).

ATP is bound at residue Gly2–Thr9. A substrate-binding site is contributed by Thr4–Thr9. Interaction with substrate tRNA stretches follow at residues Asp27–Leu30, Gln151–Arg155, and Arg232–Arg237.

The protein belongs to the IPP transferase family. As to quaternary structure, monomer. The cofactor is Mg(2+).

The catalysed reaction is adenosine(37) in tRNA + dimethylallyl diphosphate = N(6)-dimethylallyladenosine(37) in tRNA + diphosphate. Its function is as follows. Catalyzes the transfer of a dimethylallyl group onto the adenine at position 37 in tRNAs that read codons beginning with uridine, leading to the formation of N6-(dimethylallyl)adenosine (i(6)A). In Shewanella frigidimarina (strain NCIMB 400), this protein is tRNA dimethylallyltransferase.